The chain runs to 538 residues: UPF0761 membrane protein PsycPRwf_0630 (538 aa).

A run of 6 helical transmembrane segments spans residues 43 to 63, 100 to 120, 143 to 163, 183 to 203, 215 to 235, and 247 to 267; these read LLSIVPILTVLLMILSSVPAL, LTAIGALALFVTTIMTLTTIE, WTIITLGPLVLGTAFLVSSAV, WVQVVSFAVTIAGFIGMYWFI, IAGVFVAVTFELLKYSFGIIM, and AFAALPIFLLWIYLSWNLILL. The disordered stretch occupies residues 427–538; it reads SVFSAQDADA…IITEDDNPNK (112 aa). The segment covering 482-493 has biased composition (low complexity); sequence PPDADIKAAAAK. The span at 503 to 514 shows a compositional bias: basic and acidic residues; sequence KHTETAKQEHKK.

Belongs to the UPF0761 family.

It localises to the cell inner membrane. This is UPF0761 membrane protein PsycPRwf_0630 from Psychrobacter sp. (strain PRwf-1).